The chain runs to 275 residues: MANFTAADVKELRDRLGAGMMDSKNALVEADGDIEKAIEILRLKGQKGNAKRGDRSTAEGLVAASEQDGAATLIELACETDFVAKNDKFIALSESVLAAVVAAGASTVEEALQAPAGEQTVDQLISDRAAILGEKIALRRVARLAGEHQEIYLHRTSKDLPPQVGVVVDYSGTDAETARSIAQHIAFANPEYLAREDVPADKVEAERAIVTEISRNEGKPEAALPKIIEGRLTGFFKQVALLEQDYAKDNKQSVKKVVEAAGLTVTGFARFKVGA.

Residues 80–83 form an involved in Mg(2+) ion dislocation from EF-Tu region; the sequence is TDFV.

Belongs to the EF-Ts family.

It is found in the cytoplasm. Its function is as follows. Associates with the EF-Tu.GDP complex and induces the exchange of GDP to GTP. It remains bound to the aminoacyl-tRNA.EF-Tu.GTP complex up to the GTP hydrolysis stage on the ribosome. This chain is Elongation factor Ts, found in Clavibacter sepedonicus (Clavibacter michiganensis subsp. sepedonicus).